The sequence spans 909 residues: Translation initiation factor IF-2 (909 aa).

Residues 49 to 314 (LNREQGGSAG…GKQRKTSTLQ (266 aa)) are disordered. 3 stretches are compositionally biased toward basic and acidic residues: residues 99 to 177 (DAVE…EHKQ), 186 to 236 (IQSE…KWSS), and 255 to 270 (RAAE…GDRR). Over residues 271-285 (ARGRSGKATRQKKNN) the composition is skewed to basic residues. The segment covering 286 to 299 (KHSESKADREEARA) has biased composition (basic and acidic residues). Positions 408-577 (PRAPVVTIMG…LLQAEVLELK (170 aa)) constitute a tr-type G domain. A G1 region spans residues 417 to 424 (GHVDHGKT). 417–424 (GHVDHGKT) is a GTP binding site. Residues 442-446 (GITQH) are G2. The segment at 463–466 (DTPG) is G3. GTP is bound by residues 463–467 (DTPGH) and 517–520 (NKID). The G4 stretch occupies residues 517–520 (NKID). The segment at 553–555 (SAK) is G5.

It belongs to the TRAFAC class translation factor GTPase superfamily. Classic translation factor GTPase family. IF-2 subfamily.

It localises to the cytoplasm. In terms of biological role, one of the essential components for the initiation of protein synthesis. Protects formylmethionyl-tRNA from spontaneous hydrolysis and promotes its binding to the 30S ribosomal subunits. Also involved in the hydrolysis of GTP during the formation of the 70S ribosomal complex. The sequence is that of Translation initiation factor IF-2 from Photorhabdus laumondii subsp. laumondii (strain DSM 15139 / CIP 105565 / TT01) (Photorhabdus luminescens subsp. laumondii).